The chain runs to 91 residues: Large ribosomal subunit protein eL37 (91 aa).

Residues Cys19, Cys22, Cys34, and Cys37 each contribute to the Zn(2+) site. A C4-type zinc finger spans residues Cys19–Cys37.

The protein belongs to the eukaryotic ribosomal protein eL37 family. Zn(2+) serves as cofactor.

In terms of biological role, binds to the 23S rRNA. The sequence is that of Large ribosomal subunit protein eL37 from Caenorhabditis elegans.